A 743-amino-acid polypeptide reads, in one-letter code: GTPase-activating protein gyp7 (743 aa).

A Rab-GAP TBC domain is found at 411–633 (GIQPSLRKEV…KLWDVLFTNY (223 aa)).

The protein resides in the cytoplasm. It localises to the nucleus. Its function is as follows. Most effectively accelerates the intrinsic GTPase activity of ypt7. The protein is GTPase-activating protein gyp7 of Schizosaccharomyces pombe (strain 972 / ATCC 24843) (Fission yeast).